Here is a 626-residue protein sequence, read N- to C-terminus: Threonine--tRNA ligase (626 aa).

The interval 1–144 is editing domain; it reads MRMLLIHADY…LSRTIVPEEG (144 aa). The interval 207–506 is catalytic; it reads PHVRLMLEHE…QAQGKKPMFP (300 aa). 3 residues coordinate Zn(2+): cysteine 299, histidine 351, and histidine 475.

Belongs to the class-II aminoacyl-tRNA synthetase family. Homodimer. Zn(2+) is required as a cofactor.

It localises to the cytoplasm. It carries out the reaction tRNA(Thr) + L-threonine + ATP = L-threonyl-tRNA(Thr) + AMP + diphosphate + H(+). In terms of biological role, catalyzes the attachment of threonine to tRNA(Thr) in a two-step reaction: L-threonine is first activated by ATP to form Thr-AMP and then transferred to the acceptor end of tRNA(Thr). Also edits incorrectly charged L-seryl-tRNA(Thr). This is Threonine--tRNA ligase from Thermococcus gammatolerans (strain DSM 15229 / JCM 11827 / EJ3).